Here is a 122-residue protein sequence, read N- to C-terminus: Large ribosomal subunit protein eL34 (122 aa).

It belongs to the eukaryotic ribosomal protein eL34 family. As to quaternary structure, component of the large ribosomal subunit. Mature ribosomes consist of a small (40S) and a large (60S) subunit. The 40S subunit contains about 32 different proteins and 1 molecule of RNA (18S). The 60S subunit contains 45 different proteins and 3 molecules of RNA (25S, 5.8S and 5S).

Its subcellular location is the cytoplasm. In terms of biological role, component of the ribosome, a large ribonucleoprotein complex responsible for the synthesis of proteins in the cell. The small ribosomal subunit (SSU) binds messenger RNAs (mRNAs) and translates the encoded message by selecting cognate aminoacyl-transfer RNA (tRNA) molecules. The large subunit (LSU) contains the ribosomal catalytic site termed the peptidyl transferase center (PTC), which catalyzes the formation of peptide bonds, thereby polymerizing the amino acids delivered by tRNAs into a polypeptide chain. The nascent polypeptides leave the ribosome through a tunnel in the LSU and interact with protein factors that function in enzymatic processing, targeting, and the membrane insertion of nascent chains at the exit of the ribosomal tunnel. This chain is Large ribosomal subunit protein eL34, found in Candida albicans (strain SC5314 / ATCC MYA-2876) (Yeast).